The sequence spans 854 residues: Probable disease resistance protein At1g51480 (854 aa).

The stretch at 25–62 forms a coiled coil; that stretch reads RNYIHKMEANLDDLHTTMEELKNGRDDLLRRVSIEEDK. Positions 138–441 constitute an NB-ARC domain; sequence AHKIPVPKVE…CEGYINPNRY (304 aa). 180–187 is a binding site for ATP; the sequence is GMGGVGKT. LRR repeat units lie at residues 514 to 535, 536 to 557, 560 to 582, 584 to 605, 607 to 629, and 631 to 652; these read IVRQVSLISTQIEKISCSSKCS, NLSTLLLPYNKLVNISVGFFLF, KLVVLDLSTNMSLIELPEEISNL, SLQYLNLSSTGIKSLPGGMKKL, KLIYLNLEFSYKLESLVGISATL, and NLQVLKLFYSNVCVDDILMEEL.

This sequence belongs to the disease resistance NB-LRR family.

Functionally, probable disease resistance protein. The chain is Probable disease resistance protein At1g51480 from Arabidopsis thaliana (Mouse-ear cress).